The following is a 91-amino-acid chain: Metalloproteinase inhibitor 2 (91 aa).

Residues 1 to 91 (KAVSEKEVDS…FIVPWDTLST (91 aa)) enclose the NTR domain.

Belongs to the protease inhibitor I35 (TIMP) family. In terms of processing, the activity of TIMP2 is dependent on the presence of disulfide bonds.

The protein resides in the secreted. Complexes with metalloproteinases (such as collagenases) and irreversibly inactivates them. This Equus caballus (Horse) protein is Metalloproteinase inhibitor 2 (TIMP2).